Here is a 296-residue protein sequence, read N- to C-terminus: Phosphoribosylaminoimidazole-succinocarboxamide synthase (296 aa).

Belongs to the SAICAR synthetase family.

It catalyses the reaction 5-amino-1-(5-phospho-D-ribosyl)imidazole-4-carboxylate + L-aspartate + ATP = (2S)-2-[5-amino-1-(5-phospho-beta-D-ribosyl)imidazole-4-carboxamido]succinate + ADP + phosphate + 2 H(+). It participates in purine metabolism; IMP biosynthesis via de novo pathway; 5-amino-1-(5-phospho-D-ribosyl)imidazole-4-carboxamide from 5-amino-1-(5-phospho-D-ribosyl)imidazole-4-carboxylate: step 1/2. The sequence is that of Phosphoribosylaminoimidazole-succinocarboxamide synthase from Syntrophotalea carbinolica (strain DSM 2380 / NBRC 103641 / GraBd1) (Pelobacter carbinolicus).